Here is a 114-residue protein sequence, read N- to C-terminus: Thioredoxin H1 (114 aa).

N-acetylalanine is present on A2. A Thioredoxin domain is found at A2–A114. Catalysis depends on nucleophile residues C40 and C43. C40 and C43 are joined by a disulfide.

Belongs to the thioredoxin family. Plant H-type subfamily. Interacts with FBA6. Interacts with MDH1.

It is found in the cytoplasm. Functionally, thiol-disulfide oxidoreductase involved in the redox regulation of a number of cytosolic enzymes. Activates the cytosolic malate dehydrogenase (MDH) probably by reducing an interchain disulfide bond of the inactive MDH homodimer. Possesses insulin disulfide bonds reducing activity. The sequence is that of Thioredoxin H1 (TRX1) from Arabidopsis thaliana (Mouse-ear cress).